Consider the following 320-residue polypeptide: L-lactate dehydrogenase (320 aa).

NAD(+) is bound by residues Val18, Asp39, Arg44, Tyr69, and 83–84 (GA). 2 residues coordinate substrate: Gln86 and Arg92. NAD(+) contacts are provided by residues Ser105, 122-124 (AAN), and Ser147. 124-127 (NPVD) lines the substrate pocket. 152-155 (DSSR) serves as a coordination point for substrate. His179 acts as the Proton acceptor in catalysis. Phosphotyrosine is present on Tyr223. Thr232 contacts substrate.

The protein belongs to the LDH/MDH superfamily. LDH family. In terms of assembly, homotetramer.

Its subcellular location is the cytoplasm. It catalyses the reaction (S)-lactate + NAD(+) = pyruvate + NADH + H(+). It functions in the pathway fermentation; pyruvate fermentation to lactate; (S)-lactate from pyruvate: step 1/1. The quaternary structure is constitutionally similar to the active conformation of allosteric LDHs, and the regulation is independent of the fructose 1,6-bisphosphate-binding site. Its function is as follows. Catalyzes the conversion of lactate to pyruvate. The chain is L-lactate dehydrogenase from Lactiplantibacillus pentosus (Lactobacillus pentosus).